A 322-amino-acid chain; its full sequence is MARDKIGLIGSGQIGGTLAHLIGLKELGDVVMFDIADGVPQGKSLDIAQSSPVEGFDARLAGTNSYEALEGAGVCIVTAGVPRKPGMSRDDLLGINLKVMEQVGAGIRKYAPDAFVICITNPLDAMVWALQKASGLPAKKVVGMAGVLDSSRFRYFLADEFNVSVEDVTAFVLGGHGDSMVPLVKYSTVAGIPLPDLVKMGWTSQARIDEIVDRTRNGGAEIVNLLKTGSAFYAPAASAIAMAESFLRDKKRVLPCAAYLNGEFGVYDMYVGVPVVIGAKGVERIVEIELAGRDREAFDRSVAAVQGLVDACKKIAPDLLDR.

NAD(+) contacts are provided by residues 10–15 (GSGQIG) and D34. Substrate is bound by residues R83 and R89. Residues N96 and 119–121 (ITN) each bind NAD(+). Substrate is bound by residues N121 and R152. The active-site Proton acceptor is the H176.

This sequence belongs to the LDH/MDH superfamily. MDH type 3 family.

The enzyme catalyses (S)-malate + NAD(+) = oxaloacetate + NADH + H(+). Functionally, catalyzes the reversible oxidation of malate to oxaloacetate. This is Malate dehydrogenase from Nitrobacter winogradskyi (strain ATCC 25391 / DSM 10237 / CIP 104748 / NCIMB 11846 / Nb-255).